A 487-amino-acid polypeptide reads, in one-letter code: Argininosuccinate lyase (487 aa).

It belongs to the lyase 1 family. Argininosuccinate lyase subfamily.

It localises to the cytoplasm. The catalysed reaction is 2-(N(omega)-L-arginino)succinate = fumarate + L-arginine. It functions in the pathway amino-acid biosynthesis; L-arginine biosynthesis; L-arginine from L-ornithine and carbamoyl phosphate: step 3/3. This chain is Argininosuccinate lyase, found in Methanothrix thermoacetophila (strain DSM 6194 / JCM 14653 / NBRC 101360 / PT) (Methanosaeta thermophila).